Here is a 209-residue protein sequence, read N- to C-terminus: Uracil phosphoribosyltransferase (209 aa).

Residues Arg79, Arg104, and 131-139 contribute to the 5-phospho-alpha-D-ribose 1-diphosphate site; that span reads DPMLATGHS. Residues Ile194 and 199–201 each bind uracil; that span reads GDA. Asp200 contributes to the 5-phospho-alpha-D-ribose 1-diphosphate binding site.

This sequence belongs to the UPRTase family. Mg(2+) serves as cofactor.

The catalysed reaction is UMP + diphosphate = 5-phospho-alpha-D-ribose 1-diphosphate + uracil. It functions in the pathway pyrimidine metabolism; UMP biosynthesis via salvage pathway; UMP from uracil: step 1/1. Its activity is regulated as follows. Allosterically activated by GTP. In terms of biological role, catalyzes the conversion of uracil and 5-phospho-alpha-D-ribose 1-diphosphate (PRPP) to UMP and diphosphate. The protein is Uracil phosphoribosyltransferase of Caulobacter vibrioides (strain ATCC 19089 / CIP 103742 / CB 15) (Caulobacter crescentus).